Reading from the N-terminus, the 460-residue chain is tRNA(Ile)-lysidine synthase (460 aa).

30–35 (SGGLDS) provides a ligand contact to ATP.

Belongs to the tRNA(Ile)-lysidine synthase family.

Its subcellular location is the cytoplasm. The enzyme catalyses cytidine(34) in tRNA(Ile2) + L-lysine + ATP = lysidine(34) in tRNA(Ile2) + AMP + diphosphate + H(+). Functionally, ligates lysine onto the cytidine present at position 34 of the AUA codon-specific tRNA(Ile) that contains the anticodon CAU, in an ATP-dependent manner. Cytidine is converted to lysidine, thus changing the amino acid specificity of the tRNA from methionine to isoleucine. The polypeptide is tRNA(Ile)-lysidine synthase (Yersinia pestis).